Here is a 340-residue protein sequence, read N- to C-terminus: Ferrochelatase (340 aa).

Residues histidine 189 and glutamate 292 each contribute to the Fe cation site.

It belongs to the ferrochelatase family.

It localises to the cytoplasm. It catalyses the reaction heme b + 2 H(+) = protoporphyrin IX + Fe(2+). The protein operates within porphyrin-containing compound metabolism; protoheme biosynthesis; protoheme from protoporphyrin-IX: step 1/1. Catalyzes the ferrous insertion into protoporphyrin IX. This is Ferrochelatase from Pseudomonas fluorescens (strain ATCC BAA-477 / NRRL B-23932 / Pf-5).